The sequence spans 388 residues: Probable nitrate transporter NarT (388 aa).

Helical transmembrane passes span 14–34, 45–65, 69–89, 98–118, 139–159, 161–181, 206–226, 242–262, 276–296, 297–317, 330–350, and 359–379; these read TLSL…MPMI, ISIV…PFGY, IIGA…PIFL, MLML…VGVT, GNLG…AIGW, STVR…FFLG, YYLS…GIFL, GIRA…GGII, FLFM…ILFT, VGCL…FKLV, GIVS…ITYV, and LAFI…WHLS.

It belongs to the major facilitator superfamily. Nitrate/nitrite porter (TC 2.A.1.8) family.

It is found in the cell membrane. Its function is as follows. Probably required for nitrate uptake under anoxic conditions. Also possibly involved in excretion of nitrite produced by the dissimilatory reduction of nitrate. The protein is Probable nitrate transporter NarT (narT) of Staphylococcus carnosus (strain TM300).